Here is a 205-residue protein sequence, read N- to C-terminus: Large ribosomal subunit protein uL4 (205 aa).

This sequence belongs to the universal ribosomal protein uL4 family. As to quaternary structure, part of the 50S ribosomal subunit.

In terms of biological role, one of the primary rRNA binding proteins, this protein initially binds near the 5'-end of the 23S rRNA. It is important during the early stages of 50S assembly. It makes multiple contacts with different domains of the 23S rRNA in the assembled 50S subunit and ribosome. Forms part of the polypeptide exit tunnel. The polypeptide is Large ribosomal subunit protein uL4 (Ruegeria sp. (strain TM1040) (Silicibacter sp.)).